The following is a 1170-amino-acid chain: Probable mRNA-capping enzyme (1170 aa).

Lysine 292 serves as the catalytic N6-GMP-lysine intermediate. In terms of domain architecture, mRNA cap 0 methyltransferase spans 684 to 1007; the sequence is SNAAGMRAFN…LNRYYVFRKT (324 aa). 693 to 694 is an mRNA binding site; the sequence is NN. S-adenosyl-L-methionine is bound by residues lysine 697, glycine 715, aspartate 737, and 813–815; that span reads QFT.

This sequence in the N-terminal section; belongs to the dsDNA virus mRNA guanylyltransferase family. The protein in the C-terminal section; belongs to the class I-like SAM-binding methyltransferase superfamily. mRNA cap 0 methyltransferase family.

The protein resides in the virion. It catalyses the reaction a 5'-end triphospho-ribonucleoside in mRNA + H2O = a 5'-end diphospho-ribonucleoside in mRNA + phosphate + H(+). The catalysed reaction is a 5'-end diphospho-ribonucleoside in mRNA + GTP + H(+) = a 5'-end (5'-triphosphoguanosine)-ribonucleoside in mRNA + diphosphate. The enzyme catalyses a 5'-end (5'-triphosphoguanosine)-ribonucleoside in mRNA + S-adenosyl-L-methionine = a 5'-end (N(7)-methyl 5'-triphosphoguanosine)-ribonucleoside in mRNA + S-adenosyl-L-homocysteine. It participates in mRNA processing; mRNA capping. Functionally, responsible for methylating the 5'-cap structure of mRNAs. This Acanthamoeba polyphaga mimivirus (APMV) protein is Probable mRNA-capping enzyme.